We begin with the raw amino-acid sequence, 402 residues long: ORC1-type DNA replication protein 17 (402 aa).

ATP contacts are provided by Tyr223 and Arg235.

This sequence belongs to the CDC6/cdc18 family.

Functionally, involved in regulation of DNA replication. The chain is ORC1-type DNA replication protein 17 (cdc6q) from Haloarcula marismortui (strain ATCC 43049 / DSM 3752 / JCM 8966 / VKM B-1809) (Halobacterium marismortui).